Here is a 122-residue protein sequence, read N- to C-terminus: Large ribosomal subunit protein uL18 (122 aa).

It belongs to the universal ribosomal protein uL18 family. As to quaternary structure, part of the 50S ribosomal subunit; part of the 5S rRNA/L5/L18/L25 subcomplex. Contacts the 5S and 23S rRNAs.

This is one of the proteins that bind and probably mediate the attachment of the 5S RNA into the large ribosomal subunit, where it forms part of the central protuberance. This chain is Large ribosomal subunit protein uL18, found in Leptospira biflexa serovar Patoc (strain Patoc 1 / Ames).